We begin with the raw amino-acid sequence, 212 residues long: Tetraspanin-31-A (212 aa).

Residues 1–12 lie on the Cytoplasmic side of the membrane; it reads MVCGGFTCSKNA. A helical transmembrane segment spans residues 13–33; sequence LCALNVVYMLVGLLLIGVAAW. At 34–44 the chain is on the extracellular side; sequence GKGFGIVSSIH. Residues 45–65 form a helical membrane-spanning segment; it reads IIGGVIAIGVFLLLIAIIGLI. At 66–72 the chain is on the cytoplasmic side; sequence GAVSHHQ. Residues 73 to 93 form a helical membrane-spanning segment; it reads VMLFIYMVVLILVFIFQFIVS. Residues 94 to 175 are Extracellular-facing; it reads CSCLAMNRSQ…MLNHADEALK (82 aa). N-linked (GlcNAc...) asparagine glycans are attached at residues N100, N109, N117, and N134. Residues 176-196 form a helical membrane-spanning segment; that stretch reads ILGGVGLFFSFTEILGVWLAF. Over 197–212 the chain is Cytoplasmic; it reads RFRNQKDPRANPSAFL.

Belongs to the tetraspanin (TM4SF) family.

It localises to the membrane. The polypeptide is Tetraspanin-31-A (tspan31-a) (Xenopus laevis (African clawed frog)).